The chain runs to 239 residues: Cytochrome b6-f complex iron-sulfur subunit 1, cyanelle (239 aa).

A cyanelle-targeting transit peptide spans 1-60 (MAFTTTAVVAPRGAKITGQSSTCAIQNGKTVAVGTSKQVGSFKPVFAAAKPAKETTFSVS). Residues 81 to 101 (LLGAIAGPVAGAGGPFVSFLV) form a helical membrane-spanning segment. The Rieske domain maps to 125 to 221 (VSSWLETHKP…VSVLEDGVVA (97 aa)). [2Fe-2S] cluster contacts are provided by cysteine 167, histidine 169, cysteine 185, and histidine 188. Cysteine 172 and cysteine 187 form a disulfide bridge.

Belongs to the Rieske iron-sulfur protein family. As to quaternary structure, the 4 large subunits of the cytochrome b6-f complex are cytochrome b6, subunit IV (17 kDa polypeptide, petD), cytochrome f and the Rieske protein, while the 4 small subunits are petG, petL, petM and petN. The complex functions as a dimer. It depends on [2Fe-2S] cluster as a cofactor.

The protein localises to the plastid. It localises to the cyanelle thylakoid membrane. It carries out the reaction 2 oxidized [plastocyanin] + a plastoquinol + 2 H(+)(in) = 2 reduced [plastocyanin] + a plastoquinone + 4 H(+)(out). Its function is as follows. Component of the cytochrome b6-f complex, which mediates electron transfer between photosystem II (PSII) and photosystem I (PSI), cyclic electron flow around PSI, and state transitions. This is Cytochrome b6-f complex iron-sulfur subunit 1, cyanelle (petC-1) from Cyanophora paradoxa.